The chain runs to 530 residues: UDP-glucuronosyltransferase 1A9 (530 aa).

The first 25 residues, 1 to 25, serve as a signal peptide directing secretion; that stretch reads MACTGWTSPLPLCVCLLLTCGFAEA. N-linked (GlcNAc...) asparagine glycosylation is present at Asn-71. Lys-99 bears the N6-succinyllysine mark. Residues Asn-292 and Asn-344 are each glycosylated (N-linked (GlcNAc...) asparagine). Residues 488–504 traverse the membrane as a helical segment; that stretch reads VIGFLLAVVLTVAFITF.

The protein belongs to the UDP-glycosyltransferase family. As to quaternary structure, homodimer. Homooligomer. Interacts with UGT1A1, UGT1A3, UGT1A4, UGT1A6, UGT1A7, UGT1A8 and UGT1A10 to form heterodimers. Isoform 1 interacts with isoform 2/i2 suggesting that oligomerization is involved in negative regulation of transferase activity by isoform 2. Isoform 1 also interacts with respective i2 isoforms of UGT1A1, UGT1A3, UGT1A4, UGT1A6, UGT1A7, UGT1A8 and UGT1A10. Expressed in liver, kidney, colon, esophagus and small intestine.

The protein resides in the endoplasmic reticulum membrane. The enzyme catalyses glucuronate acceptor + UDP-alpha-D-glucuronate = acceptor beta-D-glucuronoside + UDP + H(+). The catalysed reaction is 2-hydroxy-17beta-estradiol + UDP-alpha-D-glucuronate = 2-hydroxy-17beta-estradiol 3-O-(beta-D-glucuronate) + UDP + H(+). It carries out the reaction 4-hydroxy-17beta-estradiol + UDP-alpha-D-glucuronate = 17beta-estradiol 4-O-(beta-D-glucuronate) + UDP + H(+). It catalyses the reaction 2-hydroxyestrone + UDP-alpha-D-glucuronate = 2-hydroxyestrone 3-O-(beta-D-glucuronate) + UDP + H(+). The enzyme catalyses 4-hydroxyestrone + UDP-alpha-D-glucuronate = estrone 4-O-(beta-D-glucuronate) + UDP + H(+). The catalysed reaction is prunetin + UDP-alpha-D-glucuronate = prunetin-5-O-beta-D-glucuronide + UDP. It carries out the reaction 8-iso-prostaglandin F2alpha + UDP-alpha-D-glucuronate = 8-iso-prostaglandin F2alpha-glucuronide + UDP + H(+). It catalyses the reaction 5-epi-5-F2t-IsoP + UDP-alpha-D-glucuronate = 5-epi-5-F2t-IsoP-glucuronide + UDP + H(+). The enzyme catalyses (5Z,8Z,11Z,14Z)-eicosatetraenoate + UDP-alpha-D-glucuronate = O-[(5Z),(8Z),(11Z),(14Z)-eicosatetraenoyl]-beta-D-glucuronate + UDP. The catalysed reaction is 15-hydroxy-(5Z,8Z,11Z,13E)-eicosatetraenoate + UDP-alpha-D-glucuronate = 15-O-(beta-D-glucuronosyl)-(5Z,8Z,11Z,14Z)-eicosatetraenoate + UDP + H(+). It carries out the reaction prostaglandin B1 + UDP-alpha-D-glucuronate = 15-O-(beta-D-glucuronosyl)-prostaglandin B1 + UDP + H(+). It catalyses the reaction (E)-ferulate + UDP-alpha-D-glucuronate = (E)-4-O-(beta-D-glucuronosyl)-ferulate + UDP + H(+). The enzyme catalyses (E)-ferulate + UDP-alpha-D-glucuronate = (E)-ferulic acid beta-D-glucuronate ester + UDP. The catalysed reaction is candesartan + UDP-alpha-D-glucuronate = candesartan O-beta-D-glucuronoside + UDP. It carries out the reaction SN-38 + UDP-alpha-D-glucuronate = SN-38 O-beta-D-glucuronide + UDP + H(+). It catalyses the reaction mycophenolate + UDP-alpha-D-glucuronate = mycophenolate 7-O-beta-D-glucuronide + UDP + H(+). Functionally, UDP-glucuronosyltransferase (UGT) that catalyzes phase II biotransformation reactions in which lipophilic substrates are conjugated with glucuronic acid to increase the metabolite's water solubility, thereby facilitating excretion into either the urine or bile. Essential for the elimination and detoxification of drugs, xenobiotics and endogenous compounds. Catalyzes the glucuronidation of endogenous estrogen hormones such as estradiol and estrone. Involved in the glucuronidation of arachidonic acid (AA) and AA-derived eicosanoids including 15-HETE, PGB1 and F2-isoprostanes (8-iso-PGF2alpha and 5-epi-5-F2t-IsoP). Glucuronates the phytochemical ferulic acid efficently at both the phenolic or the carboxylic acid group. Also catalyzes the glucuronidation of the isoflavones genistein, daidzein, glycitein, formononetin, biochanin A and prunetin, which are phytoestrogens with anticancer and cardiovascular properties. Involved in the glucuronidation of the AGTR1 angiotensin receptor antagonist caderastan, a drug which can inhibit the effect of angiotensin II. Involved in the biotransformation of 7-ethyl-10-hydroxycamptothecin (SN-38), the pharmacologically active metabolite of the anticancer drug irinotecan. Also metabolizes mycophenolate, an immunosuppressive agent. Lacks UGT glucuronidation activity but acts as a negative regulator of isoform 1. The polypeptide is UDP-glucuronosyltransferase 1A9 (Homo sapiens (Human)).